The chain runs to 526 residues: tRNA (guanine(26)-N(2))-dimethyltransferase (526 aa).

Positions 1–10 are enriched in polar residues; that stretch reads MTENVNSSGD. Residues 1–20 form a disordered region; sequence MTENVNSSGDSAIKSEDKEE. The Trm1 methyltransferase domain maps to 22–441; that stretch reads TVIQEGQAKV…APMHLLWDIY (420 aa). S-adenosyl-L-methionine is bound by residues arginine 47, arginine 104, and aspartate 122. Residues cysteine 286, cysteine 289, cysteine 325, and cysteine 328 each coordinate Zn(2+). Residues 498 to 526 form a disordered region; that stretch reads KGKNWGPRQKAKGSVNSTKAGFQLTEHKE.

The protein belongs to the class I-like SAM-binding methyltransferase superfamily. Trm1 family.

It carries out the reaction guanosine(26) in tRNA + 2 S-adenosyl-L-methionine = N(2)-dimethylguanosine(26) in tRNA + 2 S-adenosyl-L-homocysteine + 2 H(+). Functionally, dimethylates a single guanine residue at position 26 of most tRNAs using S-adenosyl-L-methionine as donor of the methyl groups. The protein is tRNA (guanine(26)-N(2))-dimethyltransferase (trm-1) of Caenorhabditis elegans.